We begin with the raw amino-acid sequence, 511 residues long: Potassium voltage-gated channel subfamily A member 10 (511 aa).

The segment at 22–50 (IQEEPGYATDFDSTSPKGRPGGSSFSNGK) is disordered. Residues 218–238 (VAVVSVLVVVISITIFCLETL) traverse the membrane as a helical segment. N256 carries an N-linked (GlcNAc...) asparagine glycan. Residues 271–292 (FFMVESTCIVWFTFELVLRFVV) traverse the membrane as a helical segment. The S-palmitoyl cysteine moiety is linked to residue C293. The chain crosses the membrane as a helical span at residues 303 to 323 (IMNIIDIISIIPYFATLITEL). Residue N334 is glycosylated (N-linked (GlcNAc...) asparagine). The chain crosses the membrane as a helical; Voltage-sensor span at residues 339–358 (ILRIIRLVRVFRIFKLSRHS). Residues 375–395 (LGLLIFFLFIGVILFSSAVYF) form a helical membrane-spanning segment. The Selectivity filter signature appears at 421 to 426 (TVGYGD). The helical transmembrane segment at 436-456 (IVGTLCAIAGVLTIALPVPVI) threads the bilayer. The tract at residues 489–511 (SRMGSTDSLNKTNGGCSTEKSRK) is disordered. Residue N498 is glycosylated (N-linked (GlcNAc...) asparagine).

Belongs to the potassium channel family. A (Shaker) (TC 1.A.1.2) subfamily. Kv1.8/KCNA10 sub-subfamily. Homotetramer. Interacts with KCN4B/POMP. Interaction with KCN4B/POMP is necessary for the modulation of channel activity by cAMP. Detected in kidney, in proximal tubules, glomerular endothelium, in vascular endothelium and in smooth muscle cells.

The protein localises to the membrane. The enzyme catalyses K(+)(in) = K(+)(out). With respect to regulation, the channel activity is up-regulated by cAMP. Its function is as follows. Voltage-gated potassium ion channel that mediates K(+) permeability of excitable membranes. When opened in response to the voltage difference across the membrane, KCNA10 channel selectively allows the flow of potassium ions across the membrane down their electrochemical gradient. In Homo sapiens (Human), this protein is Potassium voltage-gated channel subfamily A member 10.